Consider the following 248-residue polypeptide: Ribosomal RNA small subunit methyltransferase G (248 aa).

A disordered region spans residues 1–23 (MFHVKHVGPVEPAAGDPEVPPVA). Residues glycine 93, leucine 98, 143–144 (AE), and arginine 161 contribute to the S-adenosyl-L-methionine site. The tract at residues 226–248 (VVSARRAKPPHPKSARTGKAGTR) is disordered. Residues 230 to 248 (RRAKPPHPKSARTGKAGTR) are compositionally biased toward basic residues.

Belongs to the methyltransferase superfamily. RNA methyltransferase RsmG family.

Its subcellular location is the cytoplasm. Specifically methylates the N7 position of guanine in position 518 of 16S rRNA. This Mycolicibacterium paratuberculosis (strain ATCC BAA-968 / K-10) (Mycobacterium paratuberculosis) protein is Ribosomal RNA small subunit methyltransferase G.